Reading from the N-terminus, the 101-residue chain is UPF0473 protein spr0177 (101 aa).

The protein belongs to the UPF0473 family.

The chain is UPF0473 protein spr0177 from Streptococcus pneumoniae (strain ATCC BAA-255 / R6).